The sequence spans 187 residues: Inner membrane-spanning protein YciB (187 aa).

Transmembrane regions (helical) follow at residues 25–45 (ATGA…ALYK), 50–70 (MQLI…FLHD), 76–96 (WKVT…HVMG), 118–138 (INWA…YVAY), and 148–168 (FKVF…GGYI).

Belongs to the YciB family.

It localises to the cell inner membrane. In terms of biological role, plays a role in cell envelope biogenesis, maintenance of cell envelope integrity and membrane homeostasis. The sequence is that of Inner membrane-spanning protein YciB from Vibrio vulnificus (strain CMCP6).